The following is a 204-amino-acid chain: LexA repressor (204 aa).

The H-T-H motif DNA-binding region spans 27–47; sequence VREIGEAVGLASSSTVHGHLA. Residues Ser126 and Lys164 each act as for autocatalytic cleavage activity in the active site.

It belongs to the peptidase S24 family. As to quaternary structure, homodimer.

The catalysed reaction is Hydrolysis of Ala-|-Gly bond in repressor LexA.. Represses a number of genes involved in the response to DNA damage (SOS response), including recA and lexA. In the presence of single-stranded DNA, RecA interacts with LexA causing an autocatalytic cleavage which disrupts the DNA-binding part of LexA, leading to derepression of the SOS regulon and eventually DNA repair. This chain is LexA repressor, found in Listeria welshimeri serovar 6b (strain ATCC 35897 / DSM 20650 / CCUG 15529 / CIP 8149 / NCTC 11857 / SLCC 5334 / V8).